We begin with the raw amino-acid sequence, 463 residues long: Nucleobindin-1 (463 aa).

The N-terminal stretch at 1 to 26 (MPPSGPQGTLLLLPLLLLLLLRAVLA) is a signal peptide. A Phosphoserine modification is found at Ser86. A Phosphothreonine modification is found at Thr148. Residues 150–218 (EARDLELLIQ…QQRRHREHPK (69 aa)) are a coiled coil. The DNA-binding element occupies 172 to 218 (HHEEFKRYEMLKEHERRRYLESLGEEQRKEAERRLEEQQRRHREHPK). Basic and acidic residues predominate over residues 193 to 210 (SLGEEQRKEAERRLEEQQ). The tract at residues 193-221 (SLGEEQRKEAERRLEEQQRRHREHPKVNV) is disordered. A binds to GNAI2 and GNAI3 region spans residues 228 to 321 (LKEVWEELDG…VTLGEFLAST (94 aa)). EF-hand domains follow at residues 240 to 275 (PNRF…ELEK) and 292 to 327 (ERLR…KEFG). Residues Asp253, Asn255, Asp257, Glu264, Asp305, Asn307, Asp309, and Glu316 each contribute to the Ca(2+) site. The short motif at 303–333 (NVDTNQDRLVTLGEFLASTQRKEFGDTGEGW) is the GBA element. A coiled-coil region spans residues 341 to 409 (AYTEEELRRF…KQQQQQQQQQ (69 aa)). A disordered region spans residues 368-463 (LSQETEALGR…LPEVEVPQHL (96 aa)). At Ser369 the chain carries Phosphoserine. Over residues 439 to 463 (DQKEVDTSEKKLLERLPEVEVPQHL) the composition is skewed to basic and acidic residues.

The protein belongs to the nucleobindin family. In terms of assembly, interacts (via GBA motif) with guanine nucleotide-binding protein G(i) alpha subunits GNAI1, GNAI2 and GNAI3 with higher affinity for GNAI1 and GNAI3 than for GNAI2. Preferentially interacts with inactive rather than active GNAI3. Interaction with GNAI3 is inhibited when NUCB1 binds calcium, probably due to a conformational change which renders the GBA motif inaccessible.

The protein resides in the golgi apparatus. The protein localises to the cis-Golgi network membrane. It is found in the cytoplasm. It localises to the secreted. Major calcium-binding protein of the Golgi which may have a role in calcium homeostasis. Acts as a non-receptor guanine nucleotide exchange factor which binds to and activates alpha subunits of guanine nucleotide-binding proteins (G proteins). The chain is Nucleobindin-1 (NUCB1) from Pongo abelii (Sumatran orangutan).